Reading from the N-terminus, the 304-residue chain is MNKFEDFAIKLREILDIEDIKIDEPMKEHTSFKVGGPVDILLTPKHFNQVVDVVKLCKKENIPYYIMGNGSNLLVKDGGIRGVMIKLVKLNKIQVKGNKIITESGVSLKDISTTALENCLTGFEFACGIPGSVGGAVTMNAGAYNGEISNVIESAKVICNSGEIIVLNREEMELGYRMSSILKNGYTILEVTFNLEKGNKENIMNRIEDLSRRRNEKQPLEYASAGSTFKRPQGHFAAKLIEDSGLKGESVGDAQVSEKHSGFIINKGNATAKDILTLISIVQDRVRQNFDIDLYTEVRIIGED.

An FAD-binding PCMH-type domain is found at 33–198 (KVGGPVDILL…LEVTFNLEKG (166 aa)). R177 is an active-site residue. Residue S227 is the Proton donor of the active site. E297 is a catalytic residue.

Belongs to the MurB family. It depends on FAD as a cofactor.

It localises to the cytoplasm. The enzyme catalyses UDP-N-acetyl-alpha-D-muramate + NADP(+) = UDP-N-acetyl-3-O-(1-carboxyvinyl)-alpha-D-glucosamine + NADPH + H(+). Its pathway is cell wall biogenesis; peptidoglycan biosynthesis. Its function is as follows. Cell wall formation. This chain is UDP-N-acetylenolpyruvoylglucosamine reductase, found in Clostridium kluyveri (strain NBRC 12016).